The chain runs to 94 residues: Co-chaperonin GroES (94 aa).

It belongs to the GroES chaperonin family. As to quaternary structure, heptamer of 7 subunits arranged in a ring. Interacts with the chaperonin GroEL.

The protein localises to the cytoplasm. Functionally, together with the chaperonin GroEL, plays an essential role in assisting protein folding. The GroEL-GroES system forms a nano-cage that allows encapsulation of the non-native substrate proteins and provides a physical environment optimized to promote and accelerate protein folding. GroES binds to the apical surface of the GroEL ring, thereby capping the opening of the GroEL channel. The chain is Co-chaperonin GroES from Geobacillus sp. (strain WCH70).